Consider the following 104-residue polypeptide: Pyrimidine/purine nucleoside phosphorylase (104 aa).

It belongs to the nucleoside phosphorylase PpnP family.

It catalyses the reaction a purine D-ribonucleoside + phosphate = a purine nucleobase + alpha-D-ribose 1-phosphate. The catalysed reaction is adenosine + phosphate = alpha-D-ribose 1-phosphate + adenine. The enzyme catalyses cytidine + phosphate = cytosine + alpha-D-ribose 1-phosphate. It carries out the reaction guanosine + phosphate = alpha-D-ribose 1-phosphate + guanine. It catalyses the reaction inosine + phosphate = alpha-D-ribose 1-phosphate + hypoxanthine. The catalysed reaction is thymidine + phosphate = 2-deoxy-alpha-D-ribose 1-phosphate + thymine. The enzyme catalyses uridine + phosphate = alpha-D-ribose 1-phosphate + uracil. It carries out the reaction xanthosine + phosphate = alpha-D-ribose 1-phosphate + xanthine. Its function is as follows. Catalyzes the phosphorolysis of diverse nucleosides, yielding D-ribose 1-phosphate and the respective free bases. Can use uridine, adenosine, guanosine, cytidine, thymidine, inosine and xanthosine as substrates. Also catalyzes the reverse reactions. The sequence is that of Pyrimidine/purine nucleoside phosphorylase from Geotalea daltonii (strain DSM 22248 / JCM 15807 / FRC-32) (Geobacter daltonii).